The following is a 430-amino-acid chain: MNALNIADYMQTLGLQAKTASAQVARAPAAIKNRALKNLAALLRQNLGSLQAANQRDLERASAAGLAGPLLDRLKLSAKDLETVALGCEQLAAMPDVIGEIIGMKEQPSGIRVGQMRVPIGVFGMIYESRPNVTIEAASLAIKSGNACILRGGSEAIESNKALAALVRQALEQAGLPADAVQLVGTTDREAVGQLIAMPQYVDVIIPRGGKGLIERISRDAKVPVIKHLDGNCHVYVDDPCDIAMAVKIADNAKTQKYSPCNATEGLLVARGVADAFLPQIAAIYAAKGVEMRCDEAAAHILHAHPAIESIANIVPASEQDWYEEYLAPVISIKVVSGVEEAIAHINRYSSHHTDAILTRDHMHAQQFLREVDSASVMVNASTRFADGFEFGLGAEIGISTDKFHARGPVGIEGLTSLKYVVLGQGEVRT.

This sequence belongs to the gamma-glutamyl phosphate reductase family.

The protein resides in the cytoplasm. It carries out the reaction L-glutamate 5-semialdehyde + phosphate + NADP(+) = L-glutamyl 5-phosphate + NADPH + H(+). It functions in the pathway amino-acid biosynthesis; L-proline biosynthesis; L-glutamate 5-semialdehyde from L-glutamate: step 2/2. Functionally, catalyzes the NADPH-dependent reduction of L-glutamate 5-phosphate into L-glutamate 5-semialdehyde and phosphate. The product spontaneously undergoes cyclization to form 1-pyrroline-5-carboxylate. The chain is Gamma-glutamyl phosphate reductase from Polaromonas naphthalenivorans (strain CJ2).